Consider the following 245-residue polypeptide: 5-oxoprolinase subunit A (245 aa).

This sequence belongs to the LamB/PxpA family. In terms of assembly, forms a complex composed of PxpA, PxpB and PxpC.

The enzyme catalyses 5-oxo-L-proline + ATP + 2 H2O = L-glutamate + ADP + phosphate + H(+). Its function is as follows. Catalyzes the cleavage of 5-oxoproline to form L-glutamate coupled to the hydrolysis of ATP to ADP and inorganic phosphate. This Chromobacterium violaceum (strain ATCC 12472 / DSM 30191 / JCM 1249 / CCUG 213 / NBRC 12614 / NCIMB 9131 / NCTC 9757 / MK) protein is 5-oxoprolinase subunit A.